The primary structure comprises 83 residues: Cytochrome b559 subunit alpha (83 aa).

Residues 21–35 form a helical membrane-spanning segment; the sequence is VIHSITIPSLFIAGW. Histidine 23 contributes to the heme binding site.

Belongs to the PsbE/PsbF family. As to quaternary structure, heterodimer of an alpha subunit and a beta subunit. PSII is composed of 1 copy each of membrane proteins PsbA, PsbB, PsbC, PsbD, PsbE, PsbF, PsbH, PsbI, PsbJ, PsbK, PsbL, PsbM, PsbT, PsbX, PsbY, PsbZ, Psb30/Ycf12, at least 3 peripheral proteins of the oxygen-evolving complex and a large number of cofactors. It forms dimeric complexes. It depends on heme b as a cofactor.

It is found in the plastid. Its subcellular location is the chloroplast thylakoid membrane. In terms of biological role, this b-type cytochrome is tightly associated with the reaction center of photosystem II (PSII). PSII is a light-driven water:plastoquinone oxidoreductase that uses light energy to abstract electrons from H(2)O, generating O(2) and a proton gradient subsequently used for ATP formation. It consists of a core antenna complex that captures photons, and an electron transfer chain that converts photonic excitation into a charge separation. The chain is Cytochrome b559 subunit alpha from Oenothera berteroana (Bertero's evening primrose).